The chain runs to 152 residues: Deoxyuridine 5'-triphosphate nucleotidohydrolase (152 aa).

Substrate is bound by residues 71–73 (RSG), Asn-84, 88–90 (LID), and Met-98.

The protein belongs to the dUTPase family. The cofactor is Mg(2+).

The enzyme catalyses dUTP + H2O = dUMP + diphosphate + H(+). Its pathway is pyrimidine metabolism; dUMP biosynthesis; dUMP from dCTP (dUTP route): step 2/2. Its function is as follows. This enzyme is involved in nucleotide metabolism: it produces dUMP, the immediate precursor of thymidine nucleotides and it decreases the intracellular concentration of dUTP so that uracil cannot be incorporated into DNA. The sequence is that of Deoxyuridine 5'-triphosphate nucleotidohydrolase from Shewanella loihica (strain ATCC BAA-1088 / PV-4).